The chain runs to 475 residues: Ribulose bisphosphate carboxylase large chain (475 aa).

Residues M1 to S2 constitute a propeptide that is removed on maturation. At P3 the chain carries N-acetylproline. The residue at position 14 (K14) is an N6,N6,N6-trimethyllysine. N123 and T173 together coordinate substrate. The Proton acceptor role is filled by K175. K177 is a substrate binding site. Mg(2+) contacts are provided by K201, D203, and E204. Residue K201 is modified to N6-carboxylysine. The active-site Proton acceptor is H294. Substrate-binding residues include R295, H327, and S379.

Belongs to the RuBisCO large chain family. Type I subfamily. In terms of assembly, heterohexadecamer of 8 large chains and 8 small chains; disulfide-linked. The disulfide link is formed within the large subunit homodimers. It depends on Mg(2+) as a cofactor. The disulfide bond which can form in the large chain dimeric partners within the hexadecamer appears to be associated with oxidative stress and protein turnover.

The protein localises to the plastid. Its subcellular location is the chloroplast. It carries out the reaction 2 (2R)-3-phosphoglycerate + 2 H(+) = D-ribulose 1,5-bisphosphate + CO2 + H2O. The catalysed reaction is D-ribulose 1,5-bisphosphate + O2 = 2-phosphoglycolate + (2R)-3-phosphoglycerate + 2 H(+). In terms of biological role, ruBisCO catalyzes two reactions: the carboxylation of D-ribulose 1,5-bisphosphate, the primary event in carbon dioxide fixation, as well as the oxidative fragmentation of the pentose substrate in the photorespiration process. Both reactions occur simultaneously and in competition at the same active site. This Atriplex rosea (Red orache) protein is Ribulose bisphosphate carboxylase large chain.